We begin with the raw amino-acid sequence, 466 residues long: Collagenase 3 (466 aa).

Residues 1 to 13 (ATFFLLSWTHCWS) form the signal peptide. Positions 14–98 (LPLPYGDDDD…PRCGVPDVGV (85 aa)) are cleaved as a propeptide — activation peptide. A Cysteine switch motif is present at residues 89–96 (PRCGVPDV). Cys91 provides a ligand contact to Zn(2+). N-linked (GlcNAc...) asparagine glycosylation occurs at Asn112. A Ca(2+)-binding site is contributed by Asp123. Residue Asn147 is glycosylated (N-linked (GlcNAc...) asparagine). Ca(2+) is bound at residue Asp157. 2 residues coordinate Zn(2+): His167 and Asp169. The segment at 171 to 241 (YPFDGPSGLL…GALMFPIYTY (71 aa)) is interaction with TIMP2. 4 residues coordinate Ca(2+): Asp174, Gly175, Ser177, and Leu179. His182 lines the Zn(2+) pocket. Asn189, Gly191, and Asp193 together coordinate Ca(2+). His195 provides a ligand contact to Zn(2+). Ca(2+)-binding residues include Asp197, Asp198, and Glu200. His217 is a binding site for Zn(2+). Residue Glu218 is part of the active site. Residues His221, His227, and Met235 each coordinate Zn(2+). The segment at 258-279 (QSLYGPGDEDPNPKHPKTPEKC) is disordered. The interval 263 to 466 (PGDEDPNPKH…VMPTNSLLWC (204 aa)) is interaction with collagen. Basic and acidic residues predominate over residues 268–279 (PNPKHPKTPEKC). Hemopexin repeat units follow at residues 276 to 325 (PEKC…WPEL), 326 to 372 (PNHV…GFPK), 374 to 422 (VKRL…FPGI), and 423 to 466 (GDKV…LLWC). The cysteines at positions 279 and 466 are disulfide-linked. Asp286, Ile288, Asp330, and Ala332 together coordinate Ca(2+). At Tyr361 the chain carries Phosphotyrosine; by PKDCC. Ca(2+) contacts are provided by Ser378 and Ala380. N-linked (GlcNAc...) asparagine glycosylation is present at Asn404. Residues Asp427 and Val429 each contribute to the Ca(2+) site.

Belongs to the peptidase M10A family. It depends on Ca(2+) as a cofactor. Requires Zn(2+) as cofactor. Post-translationally, the proenzyme is activated by removal of the propeptide; this cleavage can be effected by other matrix metalloproteinases, such as MMP2, MMP3 and MMP14 and may involve several cleavage steps. Cleavage can also be autocatalytic, after partial maturation by another protease or after treatment with 4-aminophenylmercuric acetate (APMA) (in vitro). N-glycosylated. In terms of processing, tyrosine phosphorylated by PKDCC/VLK.

The protein resides in the secreted. Its subcellular location is the extracellular space. It localises to the extracellular matrix. Its function is as follows. Plays a role in the degradation of extracellular matrix proteins including fibrillar collagen, fibronectin, TNC and ACAN. Cleaves triple helical collagens, including type I, type II and type III collagen, but has the highest activity with soluble type II collagen. Can also degrade collagen type IV, type XIV and type X. May also function by activating or degrading key regulatory proteins, such as TGFB1 and CCN2. Plays a role in wound healing, tissue remodeling, cartilage degradation, bone development, bone mineralization and ossification. Required for normal embryonic bone development and ossification. Plays a role in the healing of bone fractures via endochondral ossification. Plays a role in wound healing, probably by a mechanism that involves proteolytic activation of TGFB1 and degradation of CCN2. Plays a role in keratinocyte migration during wound healing. May play a role in cell migration and in tumor cell invasion. The sequence is that of Collagenase 3 (Mmp13) from Rattus norvegicus (Rat).